A 122-amino-acid polypeptide reads, in one-letter code: MYVSENESAVEKWHRLNGVPMSKARNSEEALHEMGLSKYPTERAFNHLSDEQKGMLKALADIEPFEDYISPDLTGDKLWHYNEKGIDKLTKAFHAMSALRTPFPRALTRRDFYNIDPHTRGK.

This is an uncharacterized protein from Haemophilus phage HP1 (strain HP1c1) (Bacteriophage HP1).